The chain runs to 270 residues: Phospholysine phosphohistidine inorganic pyrophosphate phosphatase (270 aa).

Mg(2+) contacts are provided by Asp-14 and Ser-16. Substrate is bound by residues 14–16 (DVS), 52–53 (TN), and Lys-187. Asp-212 is a binding site for Mg(2+).

It belongs to the HAD-like hydrolase superfamily. Mg(2+) serves as cofactor.

Its subcellular location is the cytoplasm. The protein localises to the nucleus. The enzyme catalyses diphosphate + H2O = 2 phosphate + H(+). Functionally, phosphatase that hydrolyzes imidodiphosphate, 3-phosphohistidine and 6-phospholysine. Has broad substrate specificity and can also hydrolyze inorganic diphosphate, but with lower efficiency. This is Phospholysine phosphohistidine inorganic pyrophosphate phosphatase (lhpp) from Xenopus laevis (African clawed frog).